Reading from the N-terminus, the 218-residue chain is 3,4-dihydroxy-2-butanone 4-phosphate synthase (218 aa).

Residues 37–38 (RE), Asp-42, 150–154 (RGGHT), and Glu-174 each bind D-ribulose 5-phosphate. Glu-38 serves as a coordination point for Mg(2+). Position 153 (His-153) interacts with Mg(2+).

The protein belongs to the DHBP synthase family. Homodimer. The cofactor is Mg(2+). Requires Mn(2+) as cofactor.

The enzyme catalyses D-ribulose 5-phosphate = (2S)-2-hydroxy-3-oxobutyl phosphate + formate + H(+). The protein operates within cofactor biosynthesis; riboflavin biosynthesis; 2-hydroxy-3-oxobutyl phosphate from D-ribulose 5-phosphate: step 1/1. Functionally, catalyzes the conversion of D-ribulose 5-phosphate to formate and 3,4-dihydroxy-2-butanone 4-phosphate. The protein is 3,4-dihydroxy-2-butanone 4-phosphate synthase of Erwinia tasmaniensis (strain DSM 17950 / CFBP 7177 / CIP 109463 / NCPPB 4357 / Et1/99).